A 299-amino-acid chain; its full sequence is ATP phosphoribosyltransferase (299 aa).

This sequence belongs to the ATP phosphoribosyltransferase family. Long subfamily. In terms of assembly, equilibrium between an active dimeric form, an inactive hexameric form and higher aggregates. Interconversion between the various forms is largely reversible and is influenced by the natural substrates and inhibitors of the enzyme. It depends on Mg(2+) as a cofactor.

The protein resides in the cytoplasm. It catalyses the reaction 1-(5-phospho-beta-D-ribosyl)-ATP + diphosphate = 5-phospho-alpha-D-ribose 1-diphosphate + ATP. It participates in amino-acid biosynthesis; L-histidine biosynthesis; L-histidine from 5-phospho-alpha-D-ribose 1-diphosphate: step 1/9. Feedback inhibited by histidine. Catalyzes the condensation of ATP and 5-phosphoribose 1-diphosphate to form N'-(5'-phosphoribosyl)-ATP (PR-ATP). Has a crucial role in the pathway because the rate of histidine biosynthesis seems to be controlled primarily by regulation of HisG enzymatic activity. This is ATP phosphoribosyltransferase from Sodalis glossinidius (strain morsitans).